The primary structure comprises 462 residues: S-alkyl-thiohydroximate lyase SUR1 (462 aa).

Belongs to the class-I pyridoxal-phosphate-dependent aminotransferase family. Pyridoxal 5'-phosphate is required as a cofactor.

In terms of biological role, C-S lyase involved in glucosinolate biosynthesis. Converts S-(alkylacetohydroximoyl)-L-cysteine to thiohydroximate. Functions in auxin homeostasis. Probably required for glucosinolate activation in response to pathogens. The sequence is that of S-alkyl-thiohydroximate lyase SUR1 (SUR1) from Arabidopsis thaliana (Mouse-ear cress).